A 358-amino-acid polypeptide reads, in one-letter code: Forkhead box protein I1c (358 aa).

Residues 1–13 (MNSIHLPSHQRTS) are compositionally biased toward polar residues. 2 disordered regions span residues 1–25 (MNSI…PKGA) and 191–255 (DNGN…PSGI). The segment at residues 106–200 (RPPYSYSALI…DNGNFRRKRK (95 aa)) is a DNA-binding region (fork-head).

The protein resides in the nucleus. Functionally, probable transcription factor. This Xenopus tropicalis (Western clawed frog) protein is Forkhead box protein I1c.